A 154-amino-acid chain; its full sequence is METLKSENKKRVLPSWMTAPVDEKRELSVKTPKRKKIAAGQVGLATRAPVMKTVYCMNEAEMVDVALGILIEGRKQEEPTLVAPDKPQPSPPYSASPHTSSPGSSSEKEDSGNRWPALGLSPSHGPEAADSPCSRSPEEEEEDALKYVREIFFS.

N-acetylmethionine is present on Met1. The KBM motif lies at 1 to 21; the sequence is METLKSENKKRVLPSWMTAPV. Residues 77-144 form a disordered region; the sequence is EEPTLVAPDK…RSPEEEEEDA (68 aa). A compositionally biased stretch (low complexity) spans 95 to 105; that stretch reads ASPHTSSPGSS. The short motif at 144–154 is the XLM element; that stretch reads ALKYVREIFFS.

In terms of assembly, interacts (via KBM motif) with XRCC5/Ku80 and XRCC6/Ku70 heterodimer. Interacts (via XLF motif) with TRIM28/KAP1, ATM, MRE11, NBN and RAD50. Interacts with splicing factor SF3B1. Interacts with ERCC6L2; this interaction is DNA independent.

The protein resides in the cytoplasm. Its subcellular location is the nucleus. It is found in the chromosome. Cell-cycle-specific regulator of classical non-homologous end joining (NHEJ) of DNA double-strand break (DSB) repair, which can act both as an activator or inhibitor of NHEJ, depending on the cell cycle phase. Acts as a regulator of DNA repair pathway choice by specifically inhibiting classical NHEJ during the S and G2 phases, thereby promoting error-free repair by homologous recombination during cell cycle phases when sister chromatids are present. Preferentially protects single-stranded overhangs at break sites by inhibiting classical NHEJ, thereby creating a local environment that favors homologous recombination. Acts via interaction with XRCC5/Ku80 and XRCC6/Ku70. In contrast, acts as an activator of NHEJ during G1 phase of the cell cycle: promotes classical NHEJ in G1 phase cells via multivalent interactions that increase the affinity of DNA damage response proteins for DSB-associated chromatin. Also involved in immunoglobulin V(D)J recombination. May act as a regulator of proteasome. In case of infection by a retrovirus, may regulate the proteasome during the uncoating phase of retrovirus. The sequence is that of Cell cycle regulator of non-homologous end joining from Cricetulus griseus (Chinese hamster).